The following is a 340-amino-acid chain: Cobalt-precorrin-5B C(1)-methyltransferase (340 aa).

The protein belongs to the CbiD family.

It catalyses the reaction Co-precorrin-5B + S-adenosyl-L-methionine = Co-precorrin-6A + S-adenosyl-L-homocysteine. It functions in the pathway cofactor biosynthesis; adenosylcobalamin biosynthesis; cob(II)yrinate a,c-diamide from sirohydrochlorin (anaerobic route): step 6/10. In terms of biological role, catalyzes the methylation of C-1 in cobalt-precorrin-5B to form cobalt-precorrin-6A. This is Cobalt-precorrin-5B C(1)-methyltransferase from Methanococcoides burtonii (strain DSM 6242 / NBRC 107633 / OCM 468 / ACE-M).